Reading from the N-terminus, the 245-residue chain is 3-deoxy-manno-octulosonate cytidylyltransferase (245 aa).

The protein belongs to the KdsB family.

Its subcellular location is the cytoplasm. The enzyme catalyses 3-deoxy-alpha-D-manno-oct-2-ulosonate + CTP = CMP-3-deoxy-beta-D-manno-octulosonate + diphosphate. It participates in nucleotide-sugar biosynthesis; CMP-3-deoxy-D-manno-octulosonate biosynthesis; CMP-3-deoxy-D-manno-octulosonate from 3-deoxy-D-manno-octulosonate and CTP: step 1/1. Its pathway is bacterial outer membrane biogenesis; lipopolysaccharide biosynthesis. Functionally, activates KDO (a required 8-carbon sugar) for incorporation into bacterial lipopolysaccharide in Gram-negative bacteria. This chain is 3-deoxy-manno-octulosonate cytidylyltransferase, found in Rhodopseudomonas palustris (strain BisB18).